The primary structure comprises 391 residues: MEEFNTTVRISGFVLSSLMFHHLNSDADVEGLILGESVGEENCRITDSQIDHIQFEHTLNIQKHIPCHKLHSFYSNVGDVSEQKIRQILSDYKEENVIGWYRQRRNTRQQMTFMEQVIHRNMRKILSNQELVFMLLTPSQGTASGSTHRLEFSAFIWHSSQYINIPISVSNLGNLEQQDYWRVSSTCPSLGQSQAVNQHRAKFFCSGDDLREVRNVSDMNDALLAEMQKVCVEVEKSERTVEKLQEDIAQLKEAIGKQKTHPEEHETPISACPEEPKENTLLCSALRTLFPSVPSLRTQTLTVHGFPVLQLCCNTDHNIDISTKLPQILENQHSRRKVTAPRLRKKCLVASFPQRLKRKRKTREVSESASESGSDTEIEMNGQSGSNSPVF.

The MPN domain maps to 8–156 (VRISGFVLSS…THRLEFSAFI (149 aa)). Residues 223–261 (LLAEMQKVCVEVEKSERTVEKLQEDIAQLKEAIGKQKTH) are a coiled coil. Residues 354-391 (QRLKRKRKTREVSESASESGSDTEIEMNGQSGSNSPVF) are disordered. The segment covering 367–391 (ESASESGSDTEIEMNGQSGSNSPVF) has biased composition (polar residues). Ser-388 bears the Phosphoserine mark. A pSXXF motif motif is present at residues 388-391 (SPVF).

The protein belongs to the FAM175 family. Abraxas subfamily. Component of the ARISC complex. Component of the BRCA1-A complex. Homodimer. In terms of processing, phosphorylation of Ser-388 of the pSXXF motif by ATM or ATR constitutes a specific recognition motif for the BRCT domain of BRCA1.

It localises to the nucleus. Involved in DNA damage response and double-strand break (DSB) repair. Component of the BRCA1-A complex, acting as a central scaffold protein that assembles the various components of the complex. The BRCA1-A complex specifically recognizes 'Lys-63'-linked ubiquitinated histones H2A and H2AX at DNA lesion sites. This complex also possesses deubiquitinase activity that specifically removes 'Lys-63'-linked ubiquitin on histones H2A and H2AX. The chain is BRCA1-A complex subunit Abraxas 1 from Danio rerio (Zebrafish).